Reading from the N-terminus, the 360-residue chain is Inward rectifier potassium channel 13 (360 aa).

Residues 1–50 (MDSSNCKVNAPLLSQRHRRMVTKDGHSTLQMDGAQRGLVYLRDAWGILMD) are Cytoplasmic-facing. The helical transmembrane segment at 51–77 (MRWRWMMLVFSASFVVHWLVFAVLWYA) threads the bilayer. The Extracellular portion of the chain corresponds to 78–105 (VAEMNGDLEIDHDVPPENHTICVKHITS). Positions 106 to 122 (FTAAFSFSLETQLTIGY) form an intramembrane region, helical; Pore-forming. Residues 119–124 (TIGYGT) carry the Selectivity filter motif. Residues 123–131 (GTMFPSGDC) lie on the Extracellular side of the membrane. Residues 132–157 (PSAIALLAIQMLLGLMLEAFITGAFV) traverse the membrane as a helical segment. Over 158–360 (AKIARPKNRA…FQIAETGLTE (203 aa)) the chain is Cytoplasmic. Position 287 is a phosphoserine; by PKA (serine 287).

This sequence belongs to the inward rectifier-type potassium channel (TC 1.A.2.1) family. KCNJ13 subfamily. Homotetramer. Interacts with RAB28; the interaction may facilitate cone outer segments phagocytosis. In terms of processing, phosphorylation at Ser-287 by PKA increases ionic currents. As to expression, expressed in retina.

It is found in the membrane. The protein localises to the cell membrane. The enzyme catalyses K(+)(in) = K(+)(out). Inhibited by Ba(2+) and Cs(+), although sensitivity to those inhibitors is much lower than in other Kir channels. Functionally, inward rectifier potassium channels are characterized by a greater tendency to allow potassium to flow into the cell rather than out of it. Their voltage dependence is regulated by the concentration of extracellular potassium; as external potassium is raised, the voltage range of the channel opening shifts to more positive voltages. The inward rectification is mainly due to the blockage of outward current by internal magnesium. KCNJ13 has a very low single channel conductance, low sensitivity to block by external barium and cesium, and no dependence of its inward rectification properties on the internal blocking particle magnesium. The polypeptide is Inward rectifier potassium channel 13 (Mus musculus (Mouse)).